Reading from the N-terminus, the 98-residue chain is Secreted LysM effector Mgx1LysM (98 aa).

Positions 1–18 (MKVTTIIAALLSVAVVDA) are cleaved as a signal peptide. 2 disulfides stabilise this stretch: Cys-31/Cys-89 and Cys-62/Cys-97. A LysM domain is found at 37–85 (IPYVVKKGDTLTHIAHDIYKRKVGICDLAYTNHIGKNPNLIYAGQTLLI). Residues Gly-44, Thr-48, Asn-75, and Ile-77 each coordinate chitin.

This sequence belongs to the secreted LysM effector family. In terms of assembly, forms homodimers in a chitin-independent manner through interactions at the N-termini of Mgx1LysM monomers. Homodimers are further polymerized in a chitin-dependent manner.

The protein resides in the secreted. It is found in the cell wall. In terms of biological role, secreted effector that enables the plant pathogenic fungus to manipulate host defenses for successful infection. Binds chitin and suppresses the chitin-induced reactive oxygen species (ROS) burst. Chitin-induced polymerization of homodimers forms a contiguous Mg1LysM highly oligomeric super-complexe that is anchored to the chitin in the fungal cell wall to prevent hydrolysis by host chitinases. The polypeptide is Secreted LysM effector Mgx1LysM (Zymoseptoria tritici (strain ST99CH_3D7)).